The chain runs to 486 residues: Small ribosomal subunit protein uS17B (486 aa).

Residues 1-112 (MRDIGINGIK…IENKSNINFV (112 aa)) form a 30S ribosomal protein S17 region. The unknown stretch occupies residues 113-486 (DNLLNVDDKW…ELWTRKNYKS (374 aa)).

This sequence belongs to the universal ribosomal protein uS17 family. In terms of assembly, part of the 30S ribosomal subunit.

Its function is as follows. One of the primary rRNA binding proteins, it binds specifically to the 5'-end of 16S ribosomal RNA. The chain is Small ribosomal subunit protein uS17B from Methanosarcina acetivorans (strain ATCC 35395 / DSM 2834 / JCM 12185 / C2A).